Consider the following 530-residue polypeptide: Tyrosinase (530 aa).

Residues 1-18 form the signal peptide; that stretch reads MLLAALCCLLWSFRTSTG. Over 19-473 the chain is Lumenal, melanosome; it reads HFPRACASSK…IKPYLEQASR (455 aa). N-linked (GlcNAc...) asparagine glycans are attached at residues asparagine 86, asparagine 111, and asparagine 161. Cu cation contacts are provided by histidine 180, histidine 202, and histidine 211. N-linked (GlcNAc...) asparagine glycosylation is found at asparagine 230 and asparagine 337. Residues histidine 363 and histidine 367 each coordinate Cu cation. Asparagine 371 carries N-linked (GlcNAc...) asparagine glycosylation. Histidine 390 contributes to the Cu cation binding site. A helical membrane pass occupies residues 474-494; it reads IWPWLIGAAVVGCVVTAVLGG. Topologically, residues 495–530 are cytoplasmic; that stretch reads LTSLLCRRNRKQLHEEKQPLLMEKEDYHSLLYQTHL.

It belongs to the tyrosinase family. As to quaternary structure, forms an OPN3-dependent complex with DCT in response to blue light in melanocytes. Cu(2+) is required as a cofactor. In terms of processing, glycosylated.

It is found in the melanosome membrane. It localises to the melanosome. The catalysed reaction is 2 L-dopa + O2 = 2 L-dopaquinone + 2 H2O. The enzyme catalyses L-tyrosine + O2 = L-dopaquinone + H2O. It carries out the reaction 2 5,6-dihydroxyindole-2-carboxylate + O2 = 2 indole-5,6-quinone-2-carboxylate + 2 H2O. Functionally, this is a copper-containing oxidase that functions in the formation of pigments such as melanins and other polyphenolic compounds. Catalyzes the initial and rate limiting step in the cascade of reactions leading to melanin production from tyrosine. In addition to hydroxylating tyrosine to DOPA (3,4-dihydroxyphenylalanine), also catalyzes the oxidation of DOPA to DOPA-quinone, and possibly the oxidation of DHI (5,6-dihydroxyindole) to indole-5,6 quinone. This chain is Tyrosinase (TYR), found in Canis lupus familiaris (Dog).